A 361-amino-acid polypeptide reads, in one-letter code: uncharacterized protein (361 aa).

Thr-12 is modified (phosphothreonine).

It is found in the cytoplasm. It localises to the nucleus. This is an uncharacterized protein from Schizosaccharomyces pombe (strain 972 / ATCC 24843) (Fission yeast).